Reading from the N-terminus, the 557-residue chain is Copine-4 (557 aa).

C2 domains lie at 3-131 and 137-264; these read KMSN…SKSL and TAGK…VQWE. 5 residues coordinate Ca(2+): Asp-170, Asp-176, Asp-232, Asp-234, and Asp-240. A VWFA domain is found at 305 to 507; it reads QIQFTVAIDF…VLRDIVQFVP (203 aa).

Belongs to the copine family. Interacts (via VWFA domain) with ACTB, BCOR, BICD2, CCDC22, CDC42BPB, CEP162, MYCBP2, NONO, PDCD6, PITPNM2, RDX, SKIL, SKT, SPTBN1, UBE2O and WTAP. The cofactor is Ca(2+).

Its function is as follows. Probable calcium-dependent phospholipid-binding protein that may play a role in calcium-mediated intracellular processes. This Mus musculus (Mouse) protein is Copine-4.